We begin with the raw amino-acid sequence, 205 residues long: Beta-crystallin B2 (205 aa).

The residue at position 2 (Ala2) is an N-acetylalanine. Residues Ala2–Asn16 form an N-terminal arm region. Beta/gamma crystallin 'Greek key' domains lie at Pro17–Ala56 and Gly57–Lys101. Residues Val102–Glu106 form a connecting peptide region. Beta/gamma crystallin 'Greek key' domains lie at His107 to Ser148 and Gly149 to Arg191. The segment at Met193–Asn205 is C-terminal arm.

Belongs to the beta/gamma-crystallin family. As to quaternary structure, homo/heterodimer, or complexes of higher-order. The structure of beta-crystallin oligomers seems to be stabilized through interactions between the N-terminal arms.

Crystallins are the dominant structural components of the vertebrate eye lens. This Canis lupus familiaris (Dog) protein is Beta-crystallin B2 (CRYBB2).